A 424-amino-acid chain; its full sequence is 3-phosphoshikimate 1-carboxyvinyltransferase (424 aa).

Residues Lys20, Ser21, and Arg25 each coordinate 3-phosphoshikimate. Phosphoenolpyruvate is bound at residue Lys20. Phosphoenolpyruvate-binding residues include Gly92 and Arg120. Ser165, Gln167, Asp313, and Lys340 together coordinate 3-phosphoshikimate. Gln167 contacts phosphoenolpyruvate. Asp313 functions as the Proton acceptor in the catalytic mechanism. Arg344 and Arg386 together coordinate phosphoenolpyruvate.

The protein belongs to the EPSP synthase family. Monomer.

The protein resides in the cytoplasm. It catalyses the reaction 3-phosphoshikimate + phosphoenolpyruvate = 5-O-(1-carboxyvinyl)-3-phosphoshikimate + phosphate. Its pathway is metabolic intermediate biosynthesis; chorismate biosynthesis; chorismate from D-erythrose 4-phosphate and phosphoenolpyruvate: step 6/7. Functionally, catalyzes the transfer of the enolpyruvyl moiety of phosphoenolpyruvate (PEP) to the 5-hydroxyl of shikimate-3-phosphate (S3P) to produce enolpyruvyl shikimate-3-phosphate and inorganic phosphate. The protein is 3-phosphoshikimate 1-carboxyvinyltransferase of Bacillus cytotoxicus (strain DSM 22905 / CIP 110041 / 391-98 / NVH 391-98).